The primary structure comprises 140 residues: Nucleoside diphosphate kinase (140 aa).

Positions 11, 59, 87, 93, 104, and 114 each coordinate ATP. Histidine 117 (pros-phosphohistidine intermediate) is an active-site residue.

This sequence belongs to the NDK family. As to quaternary structure, homotetramer. Mg(2+) is required as a cofactor.

It is found in the cytoplasm. The enzyme catalyses a 2'-deoxyribonucleoside 5'-diphosphate + ATP = a 2'-deoxyribonucleoside 5'-triphosphate + ADP. It carries out the reaction a ribonucleoside 5'-diphosphate + ATP = a ribonucleoside 5'-triphosphate + ADP. Major role in the synthesis of nucleoside triphosphates other than ATP. The ATP gamma phosphate is transferred to the NDP beta phosphate via a ping-pong mechanism, using a phosphorylated active-site intermediate. The protein is Nucleoside diphosphate kinase of Brucella melitensis biotype 1 (strain ATCC 23456 / CCUG 17765 / NCTC 10094 / 16M).